A 510-amino-acid chain; its full sequence is ATP synthase subunit alpha 1 (510 aa).

Residue 167–174 coordinates ATP; the sequence is GDRATGKT.

Belongs to the ATPase alpha/beta chains family. As to quaternary structure, F-type ATPases have 2 components, CF(1) - the catalytic core - and CF(0) - the membrane proton channel. CF(1) has five subunits: alpha(3), beta(3), gamma(1), delta(1), epsilon(1). CF(0) has three main subunits: a(1), b(2) and c(9-12). The alpha and beta chains form an alternating ring which encloses part of the gamma chain. CF(1) is attached to CF(0) by a central stalk formed by the gamma and epsilon chains, while a peripheral stalk is formed by the delta and b chains.

It localises to the cell inner membrane. The catalysed reaction is ATP + H2O + 4 H(+)(in) = ADP + phosphate + 5 H(+)(out). Produces ATP from ADP in the presence of a proton gradient across the membrane. The alpha chain is a regulatory subunit. The polypeptide is ATP synthase subunit alpha 1 (Paraburkholderia xenovorans (strain LB400)).